The following is a 233-amino-acid chain: MIELKHVTFGYNKKQMVLQDINITIPDGENVGILGESGCGKSTLASLVLGLFKPVKGEIYLSDNAVLPIFQHPLTSFNPDWTIETSLKEALYYYRGLTDNTAQDQLLIQHLSTFELNAQLLTKLPSEVSGGQLQRFNVMRSLLAQPRVLICDEITSNLDVIAEQNVINILKAQTITNLNHFIVISHDLSVLQRLVNRIIVLKDGMIVDDFTIEELFNVDRHPYTKELVQAFSY.

The 227-residue stretch at 2 to 228 folds into the ABC transporter domain; it reads IELKHVTFGY…DRHPYTKELV (227 aa). 35-42 is an ATP binding site; the sequence is GESGCGKS.

It belongs to the ABC transporter superfamily. In terms of assembly, the complex is composed of two ATP-binding proteins (NikD and NikE), two transmembrane proteins (NikB and NikC) and a solute-binding protein (NikA).

The protein localises to the cell membrane. It carries out the reaction Ni(2+)(out) + ATP + H2O = Ni(2+)(in) + ADP + phosphate + H(+). Functionally, part of the ABC transporter complex NikABCDE (Opp2) involved in nickel import. Probably responsible for energy coupling to the transport system. The polypeptide is Nickel import system ATP-binding protein NikE (Staphylococcus aureus (strain MRSA252)).